The sequence spans 652 residues: Carboxypeptidase Z (652 aa).

Residues 1–20 (MPTTPLLLAALAALAALAVA) form the signal peptide. The FZ domain maps to 41–163 (THSATCVDLH…APEEEGCYDP (123 aa)). Cystine bridges form between Cys46/Cys112, Cys54/Cys105, Cys96/Cys132, Cys121/Cys160, and Cys125/Cys149. N-linked (GlcNAc...) asparagine glycosylation occurs at Asn60. Positions 189–505 (AHHSYAQMVR…EPLLNFLEMV (317 aa)) constitute a Peptidase M14 domain. 2 residues coordinate Zn(2+): His251 and Glu254. An N-linked (GlcNAc...) asparagine glycan is attached at Asn284. Position 383 (His383) interacts with Zn(2+). The active-site Proton donor/acceptor is Glu475. The tract at residues 594 to 628 (FLPGPSRALPRSLDPQGAPAQLDFEPPRARRQPAS) is disordered.

The protein belongs to the peptidase M14 family. It depends on Zn(2+) as a cofactor. In terms of tissue distribution, abundantly expressed in the placenta, with low to moderate levels in the brain, lung, thymus and kidney.

The protein resides in the secreted. The protein localises to the extracellular space. It localises to the extracellular matrix. With respect to regulation, inhibited by 2-mercaptomethyl-3-guanidinoethylthiopropanoic acid (MGTA) and guanidinoethylmercaptosuccinic acid (GEMSA). Inhibited by chelating agents such as EDTA and EGTA. Its function is as follows. Cleaves substrates with C-terminal arginine residues. Probably modulates the Wnt signaling pathway, by cleaving some undefined protein. May play a role in cleavage during prohormone processing. This is Carboxypeptidase Z (Cpz) from Rattus norvegicus (Rat).